The primary structure comprises 396 residues: Flavohemoprotein (396 aa).

Residues 1-136 (MLDAQTIATV…LANVFINREA (136 aa)) form the Globin domain. H85 contacts heme b. Residues Y95 and E135 each act as charge relay system in the active site. Positions 147-396 (GGWEGTRDFR…YECFGPHKVL (250 aa)) are reductase. In terms of domain architecture, FAD-binding FR-type spans 150–255 (EGTRDFRIVA…VAPAGDFFMA (106 aa)). FAD-binding positions include Y188 and 204–207 (RQYS). NADP(+) is bound at residue 268-273 (GVGQTP). 389–392 (CFGP) lines the FAD pocket.

This sequence belongs to the globin family. Two-domain flavohemoproteins subfamily. The protein in the C-terminal section; belongs to the flavoprotein pyridine nucleotide cytochrome reductase family. Requires heme b as cofactor. FAD serves as cofactor.

The enzyme catalyses 2 nitric oxide + NADPH + 2 O2 = 2 nitrate + NADP(+) + H(+). It carries out the reaction 2 nitric oxide + NADH + 2 O2 = 2 nitrate + NAD(+) + H(+). In terms of biological role, is involved in NO detoxification in an aerobic process, termed nitric oxide dioxygenase (NOD) reaction that utilizes O(2) and NAD(P)H to convert NO to nitrate, which protects the bacterium from various noxious nitrogen compounds. Therefore, plays a central role in the inducible response to nitrosative stress. The sequence is that of Flavohemoprotein from Shigella flexneri.